A 237-amino-acid chain; its full sequence is Germination-specific N-acetylmuramoyl-L-alanine amidase (237 aa).

Residues 1–27 form the signal peptide; that stretch reads MRKKLKWLSFLLGFIILLFLFKYQFSN. The MurNAc-LAA domain maps to 43-226; it reads IYLDPGHGGP…VASSIYKGIL (184 aa).

Belongs to the N-acetylmuramoyl-L-alanine amidase 3 family.

The protein localises to the secreted. The catalysed reaction is Hydrolyzes the link between N-acetylmuramoyl residues and L-amino acid residues in certain cell-wall glycopeptides.. In terms of biological role, cleaves the peptide side chain from the N-acetylmuramic acid residues in peptidoglycan. This is a step in the formation of muramic delta-lactam residues in spore cortex. The chain is Germination-specific N-acetylmuramoyl-L-alanine amidase (cwlD) from Bacillus subtilis (strain 168).